The chain runs to 302 residues: Ribosomal RNA small subunit methyltransferase H (302 aa).

S-adenosyl-L-methionine contacts are provided by residues 34–36, Asp53, Phe80, Asp101, and Gln108; that span reads AGH. A disordered region spans residues 283–302; sequence LEENPRSKSAKMRVLKKIER. Residues 290–302 are compositionally biased toward basic residues; the sequence is KSAKMRVLKKIER.

Belongs to the methyltransferase superfamily. RsmH family.

The protein localises to the cytoplasm. It carries out the reaction cytidine(1402) in 16S rRNA + S-adenosyl-L-methionine = N(4)-methylcytidine(1402) in 16S rRNA + S-adenosyl-L-homocysteine + H(+). Its function is as follows. Specifically methylates the N4 position of cytidine in position 1402 (C1402) of 16S rRNA. The protein is Ribosomal RNA small subunit methyltransferase H of Mycoplasma mobile (strain ATCC 43663 / 163K / NCTC 11711) (Mesomycoplasma mobile).